A 418-amino-acid chain; its full sequence is Tubulin alpha chain (418 aa).

Gln11, Glu71, Ser140, Gly144, Thr179, Asn206, and Asn228 together coordinate GTP. Glu71 contributes to the Mg(2+) binding site. The active site involves Glu255.

The protein belongs to the tubulin family. As to quaternary structure, dimer of alpha and beta chains. A typical microtubule is a hollow water-filled tube with an outer diameter of 25 nm and an inner diameter of 15 nM. Alpha-beta heterodimers associate head-to-tail to form protofilaments running lengthwise along the microtubule wall with the beta-tubulin subunit facing the microtubule plus end conferring a structural polarity. Microtubules usually have 13 protofilaments but different protofilament numbers can be found in some organisms and specialized cells. Requires Mg(2+) as cofactor.

Its subcellular location is the cytoplasm. It is found in the cytoskeleton. It carries out the reaction GTP + H2O = GDP + phosphate + H(+). Tubulin is the major constituent of microtubules, a cylinder consisting of laterally associated linear protofilaments composed of alpha- and beta-tubulin heterodimers. Microtubules grow by the addition of GTP-tubulin dimers to the microtubule end, where a stabilizing cap forms. Below the cap, tubulin dimers are in GDP-bound state, owing to GTPase activity of alpha-tubulin. The sequence is that of Tubulin alpha chain (TUB1) from Ajellomyces capsulatus (Darling's disease fungus).